Consider the following 190-residue polypeptide: Protein GrpE (190 aa).

The protein belongs to the GrpE family. As to quaternary structure, homodimer.

The protein resides in the cytoplasm. In terms of biological role, participates actively in the response to hyperosmotic and heat shock by preventing the aggregation of stress-denatured proteins, in association with DnaK and GrpE. It is the nucleotide exchange factor for DnaK and may function as a thermosensor. Unfolded proteins bind initially to DnaJ; upon interaction with the DnaJ-bound protein, DnaK hydrolyzes its bound ATP, resulting in the formation of a stable complex. GrpE releases ADP from DnaK; ATP binding to DnaK triggers the release of the substrate protein, thus completing the reaction cycle. Several rounds of ATP-dependent interactions between DnaJ, DnaK and GrpE are required for fully efficient folding. This Streptococcus agalactiae serotype III (strain NEM316) protein is Protein GrpE.